The sequence spans 362 residues: NAC domain-containing protein 5 (362 aa).

An NAC domain is found at 3–151 (NPVGFRFRPT…TYTLCKVKFK (149 aa)). The DNA-binding element occupies 107-157 (IGEKRVLVFKNHGGSKSDWAMHEYHATFSSPNQIMTYTLCKVKFKGERREF). Positions 240-266 (DDRNNHTPQKPLTGVFSDHSTDGSDSD) are disordered.

The protein resides in the nucleus. The chain is NAC domain-containing protein 5 (NAC005) from Arabidopsis thaliana (Mouse-ear cress).